The following is a 192-amino-acid chain: Ion-translocating oxidoreductase complex subunit B (192 aa).

A hydrophobic region spans residues 1-26 (MNAIWIAVAAVSLLGLAFGAILGYAS). One can recognise a 4Fe-4S domain in the interval 32–91 (EDDPVVEKIDEILPQSQCGQCGYPGCRPYAETISCNGEKINRCAPGGEAVMLKIAELLNV). Positions 49, 52, 57, 74, 117, 120, 123, 127, 147, 150, 153, and 157 each coordinate [4Fe-4S] cluster. 4Fe-4S ferredoxin-type domains follow at residues 108–137 (MVAV…GATR) and 138–167 (AMHT…LQPV).

Belongs to the 4Fe4S bacterial-type ferredoxin family. RnfB subfamily. The complex is composed of six subunits: RsxA, RsxB, RsxC, RsxD, RsxE and RsxG. The cofactor is [4Fe-4S] cluster.

Its subcellular location is the cell inner membrane. In terms of biological role, part of a membrane-bound complex that couples electron transfer with translocation of ions across the membrane. Required to maintain the reduced state of SoxR. This is Ion-translocating oxidoreductase complex subunit B from Escherichia coli O6:K15:H31 (strain 536 / UPEC).